Here is a 216-residue protein sequence, read N- to C-terminus: MMSAEPRTVSTPAPSTPIIGVIGPPCSGKSTVARHLESLGGVWLNADEIAKSQLSDSAVIGELKSLFGDSIQMADCSLSRSRLADLVFGDDEASHARLRQLEGILHPRTRKILQSEIAKAKSERRPFVILDVPLLLESGYRDTCDEVWCLQVNPDRHQQLLASRGWNTEELERRSARQWSWKRKQSASTRVISNNGTEEELRRLVESELASVLQSK.

The DPCK domain occupies 18-216 (IIGVIGPPCS…SELASVLQSK (199 aa)). An ATP-binding site is contributed by 26 to 31 (CSGKST).

The protein belongs to the CoaE family.

It localises to the cytoplasm. It catalyses the reaction 3'-dephospho-CoA + ATP = ADP + CoA + H(+). It functions in the pathway cofactor biosynthesis; coenzyme A biosynthesis; CoA from (R)-pantothenate: step 5/5. Functionally, catalyzes the phosphorylation of the 3'-hydroxyl group of dephosphocoenzyme A to form coenzyme A. In Rhodopirellula baltica (strain DSM 10527 / NCIMB 13988 / SH1), this protein is Dephospho-CoA kinase.